A 100-amino-acid polypeptide reads, in one-letter code: Urease subunit gamma 1 (100 aa).

Belongs to the urease gamma subunit family. As to quaternary structure, heterotrimer of UreA (gamma), UreB (beta) and UreC (alpha) subunits. Three heterotrimers associate to form the active enzyme.

Its subcellular location is the cytoplasm. It carries out the reaction urea + 2 H2O + H(+) = hydrogencarbonate + 2 NH4(+). The protein operates within nitrogen metabolism; urea degradation; CO(2) and NH(3) from urea (urease route): step 1/1. Functionally, disruption of the ure1 gene cluster suggests that it protects brucellae during their passage through the stomach. The major route of infection in human brucellosis is oral. This is Urease subunit gamma 1 from Brucella abortus (strain 2308).